A 95-amino-acid chain; its full sequence is Co-chaperonin GroES (95 aa).

This sequence belongs to the GroES chaperonin family. In terms of assembly, heptamer of 7 subunits arranged in a ring. Interacts with the chaperonin GroEL.

The protein localises to the cytoplasm. Together with the chaperonin GroEL, plays an essential role in assisting protein folding. The GroEL-GroES system forms a nano-cage that allows encapsulation of the non-native substrate proteins and provides a physical environment optimized to promote and accelerate protein folding. GroES binds to the apical surface of the GroEL ring, thereby capping the opening of the GroEL channel. The sequence is that of Co-chaperonin GroES from Methylocella silvestris (strain DSM 15510 / CIP 108128 / LMG 27833 / NCIMB 13906 / BL2).